The following is a 292-amino-acid chain: 33 kDa chaperonin (292 aa).

2 disulfides stabilise this stretch: Cys230–Cys232 and Cys263–Cys266.

Belongs to the HSP33 family. In terms of processing, under oxidizing conditions two disulfide bonds are formed involving the reactive cysteines. Under reducing conditions zinc is bound to the reactive cysteines and the protein is inactive.

The protein resides in the cytoplasm. Its function is as follows. Redox regulated molecular chaperone. Protects both thermally unfolding and oxidatively damaged proteins from irreversible aggregation. Plays an important role in the bacterial defense system toward oxidative stress. This chain is 33 kDa chaperonin, found in Salmonella choleraesuis (strain SC-B67).